Reading from the N-terminus, the 417-residue chain is Sterile alpha motif domain-containing protein 14 (417 aa).

Disordered regions lie at residues 37–299 (LLAK…WQEA) and 388–417 (AAAE…AKKS). Basic residues predominate over residues 40-49 (KGRRHRPSRS). Phosphoserine occurs at positions 84 and 108. Positions 135–153 (AAASCSPPRSAPSSDSSPS) are enriched in low complexity. A compositionally biased stretch (basic and acidic residues) spans 160–173 (RAEPHSEDDSRDAS). S173 and S179 each carry phosphoserine. Composition is skewed to low complexity over residues 244–260 (SGKG…PTCS) and 276–295 (STLS…PSGP). S279 is subject to Phosphoserine. T283 bears the Phosphothreonine mark. The SAM domain maps to 326-389 (WTSQQVGQWL…KRKLKEMAAA (64 aa)). Residues 377–417 (ALVKRKLKEMAAAAEKERKAQEKAARQREKLRRREQEAKKS) are a coiled coil. Positions 390–417 (AEKERKAQEKAARQREKLRRREQEAKKS) are enriched in basic and acidic residues.

The protein is Sterile alpha motif domain-containing protein 14 (SAMD14) of Homo sapiens (Human).